A 457-amino-acid chain; its full sequence is Protein unc-93 homolog A (457 aa).

5 helical membrane-spanning segments follow: residues 8–28, 42–62, 65–85, 86–106, and 140–160; these read VLVV…LQSL, ALST…PLLI, LGCK…SVGN, FFAS…GAAP, and IFFL…SLVF. An N-linked (GlcNAc...) asparagine glycan is attached at Asn190. Transmembrane regions (helical) follow at residues 202–222, 257–277, 291–311, 320–340, 344–364, and 395–415; these read TLLG…AAFL, LCLL…LSSE, FVGY…VLYG, AVLY…LLLW, ADHL…DAVW, and FVIA…YILL.

This sequence belongs to the unc-93 family. As to expression, expressed in testis, small intestine, spleen, prostate and ovary.

The protein localises to the cell membrane. This chain is Protein unc-93 homolog A (UNC93A), found in Homo sapiens (Human).